The sequence spans 833 residues: Kinesin-like protein KIFC3 (833 aa).

The segment at 19–74 (LWRVGRAPEPEPGMARPAPAPASPAARPFPHTGPGRLRTGRGKDTPVCGDEDSSAR) is disordered. Residues 30–48 (PGMARPAPAPASPAARPFP) show a composition bias toward low complexity. Coiled coils occupy residues 102–362 (LTLQ…ENLA) and 395–432 (LLQEALRSVKAEIGQAIEEVNSNNQELLRKYRRELQLR). Residues 445–768 (NIRVIARVRP…LKFAERVRSV (324 aa)) form the Kinesin motor domain. 528–535 (GQTGAGKT) is an ATP binding site. A disordered region spans residues 786 to 833 (EHLEWEPACQTPQPSARAHSAPSSGTSSRPGSIRRKLQPSGKSRPLPV). A compositionally biased stretch (polar residues) spans 806-815 (APSSGTSSRP). Phosphoserine occurs at positions 813 and 817.

Belongs to the TRAFAC class myosin-kinesin ATPase superfamily. Kinesin family.

It localises to the cell junction. It is found in the adherens junction. The protein localises to the cytoplasm. The protein resides in the cytoskeleton. Its subcellular location is the microtubule organizing center. It localises to the centrosome. It is found in the cytoplasmic vesicle membrane. Minus-end microtubule-dependent motor protein. Involved in apically targeted transport. Required for zonula adherens maintenance. The protein is Kinesin-like protein KIFC3 (KIFC3) of Homo sapiens (Human).